The following is a 358-amino-acid chain: DNA replication and repair protein RecF (358 aa).

Position 30-37 (30-37) interacts with ATP; it reads GANGSGKT.

It belongs to the RecF family.

It localises to the cytoplasm. Functionally, the RecF protein is involved in DNA metabolism; it is required for DNA replication and normal SOS inducibility. RecF binds preferentially to single-stranded, linear DNA. It also seems to bind ATP. The protein is DNA replication and repair protein RecF of Acinetobacter baylyi (strain ATCC 33305 / BD413 / ADP1).